The primary structure comprises 169 residues: Lutropin/choriogonadotropin subunit beta (169 aa).

An N-terminal signal peptide occupies residues 1–20 (MEMLQGLLLWMLLSVGGVWA). Cystine bridges form between C29–C77, C43–C92, C46–C130, C54–C108, C58–C110, and C113–C120. N33 is a glycosylation site (N-linked (GlcNAc...) asparagine). The disordered stretch occupies residues 131–169 (APQTSSSCKDPPSQPLTSTSTPTPGASRRSSHPLPINTS). Residues 145–158 (PLTSTSTPTPGASR) are compositionally biased toward low complexity.

Belongs to the glycoprotein hormones subunit beta family. Heterodimer of a common alpha chain and a unique beta chain which confers biological specificity to thyrotropin, lutropin, follitropin and gonadotropin.

The protein resides in the secreted. Functionally, promotes spermatogenesis and ovulation by stimulating the testes and ovaries to synthesize steroids. This is Lutropin/choriogonadotropin subunit beta (LHB) from Equus asinus (Donkey).